The primary structure comprises 442 residues: UDP-N-acetylmuramoylalanine--D-glutamate ligase (442 aa).

Residue 115 to 121 coordinates ATP; the sequence is GSNGKST.

This sequence belongs to the MurCDEF family.

The protein resides in the cytoplasm. The enzyme catalyses UDP-N-acetyl-alpha-D-muramoyl-L-alanine + D-glutamate + ATP = UDP-N-acetyl-alpha-D-muramoyl-L-alanyl-D-glutamate + ADP + phosphate + H(+). Its pathway is cell wall biogenesis; peptidoglycan biosynthesis. Its function is as follows. Cell wall formation. Catalyzes the addition of glutamate to the nucleotide precursor UDP-N-acetylmuramoyl-L-alanine (UMA). This Aliivibrio salmonicida (strain LFI1238) (Vibrio salmonicida (strain LFI1238)) protein is UDP-N-acetylmuramoylalanine--D-glutamate ligase.